Reading from the N-terminus, the 155-residue chain is 3-hydroxyacyl-[acyl-carrier-protein] dehydratase FabZ (155 aa).

The active site involves His-59.

Belongs to the thioester dehydratase family. FabZ subfamily.

The protein resides in the cytoplasm. It catalyses the reaction a (3R)-hydroxyacyl-[ACP] = a (2E)-enoyl-[ACP] + H2O. Involved in unsaturated fatty acids biosynthesis. Catalyzes the dehydration of short chain beta-hydroxyacyl-ACPs and long chain saturated and unsaturated beta-hydroxyacyl-ACPs. This chain is 3-hydroxyacyl-[acyl-carrier-protein] dehydratase FabZ, found in Bartonella quintana (strain Toulouse) (Rochalimaea quintana).